The chain runs to 852 residues: Patatin-like phospholipase domain-containing protein CaO19.1504 (852 aa).

A compositionally biased stretch (low complexity) spans 41-52 (ATTDITTTPIND). Positions 41–184 (ATTDITTTPI…KKTTPTSSTS (144 aa)) are disordered. Residues 75–95 (INGTVSDSSSITDEDIMNSSY) show a composition bias toward polar residues. The segment covering 101–110 (SSTNLKSNST) has biased composition (low complexity). The segment covering 113–122 (DDDDDDDDDD) has biased composition (acidic residues). 2 stretches are compositionally biased toward low complexity: residues 129–142 (SGTT…SLSS) and 158–171 (GGSR…KGSS). The helical transmembrane segment at 207–227 (WPILIFVFSWIGILGIFYFMI) threads the bilayer. Residues 396-588 (LCLSGGACFA…RTDIPIEALN (193 aa)) form the PNPLA domain. Residues 427–431 (GTSGG) carry the GXSXG motif. Residue serine 429 is the Nucleophile of the active site. Aspartate 575 serves as the catalytic Proton acceptor. Positions 800-840 (KKLLDELDNEDEEEDEEEEEVDVDDDDDDDDDSLSDSFEIT) are disordered. Over residues 805 to 833 (ELDNEDEEEDEEEEEVDVDDDDDDDDDSL) the composition is skewed to acidic residues.

The protein belongs to the PLPL family.

The protein resides in the membrane. Functionally, probable lipid hydrolase. The chain is Patatin-like phospholipase domain-containing protein CaO19.1504 from Candida albicans (strain SC5314 / ATCC MYA-2876) (Yeast).